The following is a 227-amino-acid chain: Large ribosomal subunit protein uL3 (227 aa).

It belongs to the universal ribosomal protein uL3 family. As to quaternary structure, part of the 50S ribosomal subunit. Forms a cluster with proteins L14 and L19.

Functionally, one of the primary rRNA binding proteins, it binds directly near the 3'-end of the 23S rRNA, where it nucleates assembly of the 50S subunit. The polypeptide is Large ribosomal subunit protein uL3 (Leuconostoc citreum (strain KM20)).